We begin with the raw amino-acid sequence, 232 residues long: Ribonuclease 3 (232 aa).

Residues 2–135 enclose the RNase III domain; sequence IKALEDDLSQ…FIGALYLDQG (134 aa). Glutamate 48 serves as a coordination point for Mg(2+). Aspartate 52 is an active-site residue. Mg(2+) is bound by residues aspartate 121 and glutamate 124. The active site involves glutamate 124. The 70-residue stretch at 161 to 230 folds into the DRBM domain; sequence DHKSELQELL…ANQALQLLRR (70 aa).

It belongs to the ribonuclease III family. In terms of assembly, homodimer. Requires Mg(2+) as cofactor.

Its subcellular location is the cytoplasm. The catalysed reaction is Endonucleolytic cleavage to 5'-phosphomonoester.. Digests double-stranded RNA. Involved in the processing of primary rRNA transcript to yield the immediate precursors to the large and small rRNAs (23S and 16S). Processes some mRNAs, and tRNAs when they are encoded in the rRNA operon. Processes pre-crRNA and tracrRNA of type II CRISPR loci if present in the organism. The sequence is that of Ribonuclease 3 from Pediococcus pentosaceus (strain ATCC 25745 / CCUG 21536 / LMG 10740 / 183-1w).